The chain runs to 209 residues: NADH-ubiquinone oxidoreductase subunit 9 (209 aa).

Belongs to the complex I 30 kDa subunit family. Complex I is composed of about 30 different subunits.

It localises to the mitochondrion inner membrane. The catalysed reaction is a ubiquinone + NADH + 5 H(+)(in) = a ubiquinol + NAD(+) + 4 H(+)(out). In terms of biological role, core subunit of the mitochondrial membrane respiratory chain NADH dehydrogenase (Complex I) that is believed to belong to the minimal assembly required for catalysis. Complex I functions in the transfer of electrons from NADH to the respiratory chain. The immediate electron acceptor for the enzyme is believed to be ubiquinone. The protein is NADH-ubiquinone oxidoreductase subunit 9 (NAD9) of Paramecium tetraurelia.